The sequence spans 773 residues: Glucan endo-1,3-beta-D-glucosidase (773 aa).

Residues 1 to 194 (MPPGAKVPQA…KNYFSIAVLP (194 aa)) form a beta-sandwich subdomain region. One can recognise a GH81 domain in the interval 1-647 (MPPGAKVPQA…HWICNLDSLG (647 aa)). 5 residues coordinate Mg(2+): I31, N34, Q35, Y36, and A89. An alpha/beta subdomain region spans residues 195 to 288 (DNTVSTLTYY…QGTSFKTVYR (94 aa)). The segment at 298–647 (DKGTYDREAL…HWICNLDSLG (350 aa)) is (alpha/beta)6 barrel subdomain. Residues Y327 and K331 each coordinate (1,3-beta-D-glucosyl)n. Ca(2+) is bound by residues D365, T368, E373, and K376. The (1,3-beta-D-glucosyl)n site is built by D402 and H406. D402 is an active-site residue. Positions 454, 455, and 457 each coordinate Ca(2+). 3 residues coordinate (1,3-beta-D-glucosyl)n: N477, E479, and E483. Catalysis depends on residues E479 and E483. The Mg(2+) site is built by K527, K618, N619, and W621. 12 residues coordinate Ca(2+): D712, N714, D716, G717, K718, D723, D748, I749, N750, D752, K754, and D759.

This sequence belongs to the glycosyl hydrolase 81 family. Ca(2+) is required as a cofactor. Requires Mg(2+) as cofactor.

The protein localises to the secreted. It carries out the reaction Hydrolysis of (1-&gt;3)-beta-D-glucosidic linkages in (1-&gt;3)-beta-D-glucans.. Its activity is regulated as follows. Inhibited by manganese, zinc, and copper ions. In terms of biological role, cleaves internal linkages in 1,3-beta-glucan. May contribute to plant biomass degradation. The sequence is that of Glucan endo-1,3-beta-D-glucosidase from Acetivibrio thermocellus (strain ATCC 27405 / DSM 1237 / JCM 9322 / NBRC 103400 / NCIMB 10682 / NRRL B-4536 / VPI 7372) (Clostridium thermocellum).